A 395-amino-acid chain; its full sequence is Forkhead box protein I3 (395 aa).

Residues 131-225 (RPPYSYSALI…DNGNFRRKRK (95 aa)) constitute a DNA-binding region (fork-head). Disordered stretches follow at residues 216–288 (DNGN…GIIS) and 322–370 (RNFS…SSGS). The Nuclear localization signal signature appears at 221–227 (RRKRKRR). The span at 234 to 245 (ATTAAASSLGGL) shows a compositional bias: low complexity. Over residues 325 to 335 (SAGQLSGGTFT) the composition is skewed to polar residues. The segment covering 336–349 (PSSSSSQEVPSPEQ) has biased composition (low complexity).

As to expression, initially expressed in the pre-placodal ectoderm surrounding the neural plate, which will give rise to all craniofacial sensory organs. Expression then becomes restricted to a region immediately anterior to the first pair of somites that will give rise to the otic and epibranchial placodes, before becoming down-regulated from this region and restricted to the ectoderm and endoderm of the pharyngeal arches.

The protein resides in the nucleus. Transcription factor required for pharyngeal arch development, which is involved in otic placode development. This chain is Forkhead box protein I3, found in Gallus gallus (Chicken).